A 102-amino-acid polypeptide reads, in one-letter code: Monothiol glutaredoxin-S8 (102 aa).

The Glutaredoxin domain maps to 1–101; it reads MEKIQKMISE…PMLKRFGALW (101 aa). Cys21 lines the [2Fe-2S] cluster pocket. A Responsive for interaction with TGA factors motif is present at residues 99-102; it reads ALWL.

It belongs to the glutaredoxin family. CC-type subfamily.

It is found in the cytoplasm. The protein localises to the nucleus. In terms of biological role, may only reduce GSH-thiol disulfides, but not protein disulfides. The protein is Monothiol glutaredoxin-S8 (GRXS8) of Arabidopsis thaliana (Mouse-ear cress).